Reading from the N-terminus, the 313-residue chain is CRISPR-associated endonuclease Cas1 1 (313 aa).

Mn(2+) is bound by residues E144, H211, and D224. Residues 288–313 (PPLDAPEAVDPVIPPEEPSGDDGHRG) are disordered.

The protein belongs to the CRISPR-associated endonuclease Cas1 family. As to quaternary structure, homodimer, forms a heterotetramer with a Cas2 homodimer. Requires Mg(2+) as cofactor. It depends on Mn(2+) as a cofactor.

Its function is as follows. CRISPR (clustered regularly interspaced short palindromic repeat), is an adaptive immune system that provides protection against mobile genetic elements (viruses, transposable elements and conjugative plasmids). CRISPR clusters contain spacers, sequences complementary to antecedent mobile elements, and target invading nucleic acids. CRISPR clusters are transcribed and processed into CRISPR RNA (crRNA). Acts as a dsDNA endonuclease. Involved in the integration of spacer DNA into the CRISPR cassette. This chain is CRISPR-associated endonuclease Cas1 1, found in Rhodospirillum rubrum (strain ATCC 11170 / ATH 1.1.1 / DSM 467 / LMG 4362 / NCIMB 8255 / S1).